The primary structure comprises 609 residues: Probable ubiquitin-conjugating enzyme E2 25 (609 aa).

Disordered regions lie at residues 70-99 (EEDE…LDPE) and 151-185 (ADKE…SQFS). The span at 156-178 (ASSSKSSHANNGNNSSKKATKAS) shows a compositional bias: low complexity. In terms of domain architecture, UBC core spans 332–492 (DWAKRIQDEW…TFILSLKTMV (161 aa)). Cys-418 acts as the Glycyl thioester intermediate in catalysis.

It belongs to the ubiquitin-conjugating enzyme family. As to expression, expressed in seeds, pistils, siliques, hypocotyls and leaves.

It carries out the reaction S-ubiquitinyl-[E1 ubiquitin-activating enzyme]-L-cysteine + [E2 ubiquitin-conjugating enzyme]-L-cysteine = [E1 ubiquitin-activating enzyme]-L-cysteine + S-ubiquitinyl-[E2 ubiquitin-conjugating enzyme]-L-cysteine.. It participates in protein modification; protein ubiquitination. Accepts the ubiquitin from the E1 complex and catalyzes its covalent attachment to other proteins. This is Probable ubiquitin-conjugating enzyme E2 25 (UBC25) from Arabidopsis thaliana (Mouse-ear cress).